The primary structure comprises 376 residues: Glutamate 5-kinase (376 aa).

An ATP-binding site is contributed by Lys17. The substrate site is built by Ser56, Asp144, and Asn156. Residues 176–177 (TD) and 218–224 (TGGMQSK) contribute to the ATP site. A PUA domain is found at 283–359 (KGTLLLDAGA…QSREIASVLK (77 aa)).

The protein belongs to the glutamate 5-kinase family.

The protein resides in the cytoplasm. It catalyses the reaction L-glutamate + ATP = L-glutamyl 5-phosphate + ADP. It functions in the pathway amino-acid biosynthesis; L-proline biosynthesis; L-glutamate 5-semialdehyde from L-glutamate: step 1/2. Its function is as follows. Catalyzes the transfer of a phosphate group to glutamate to form L-glutamate 5-phosphate. The sequence is that of Glutamate 5-kinase from Desulfotalea psychrophila (strain LSv54 / DSM 12343).